The primary structure comprises 166 residues: Anaerobic nitrite reductase NSHB1 (166 aa).

The region spanning 13-163 (SFSEEQEALV…LVAAIKQEMK (151 aa)) is the Globin domain. The Homodimerization signature appears at 46 to 50 (EVAPS). 6 residues coordinate heme b: Ser56, Lys70, His74, Arg104, Thr108, and His109. Residues 116 to 128 (DAHFEVVKFALLD) carry the Homodimerization motif.

The protein belongs to the plant globin family. Homodimer. It depends on heme b as a cofactor. In terms of tissue distribution, expressed in coleoptiles, embryos, leaves, seminal roots and roots.

It localises to the cytoplasm. It is found in the nucleus. The catalysed reaction is Fe(III)-heme b-[protein] + nitric oxide + H2O = Fe(II)-heme b-[protein] + nitrite + 2 H(+). Slowly reduced by ascorbic acid (AA); this reaction may become a source of nitric oxide (NO) during hypoxia. In terms of biological role, phytoglobin that reduces nitrite to nitric oxide under anoxic conditions (e.g. during flooding or in waterlogged soil). May not function as an oxygen storage or transport protein. Has an unusually high affinity for O(2) through a hexacoordinate heme iron because of a very low dissociation constant. In Oryza sativa subsp. japonica (Rice), this protein is Anaerobic nitrite reductase NSHB1.